The primary structure comprises 414 residues: MSQNIRVVITGMGALSPIGNDVKTTWENALKGVNGIDKITRIDTEPYSVHLAGELKNFNIEDHIDKKEARRMDRFTQYAIVAAREAVKDAQLDINENTADRIGVWIGSGIGGMETFEIAHKQLMDKGPRRVSPFFVPMLIPDMATGQVSIDLGAKGPNGATVTACATGTNSIGEAFKIVQRGDADAMITGGTEAPITHMAIAGFSASRALSTNDDIETACRPFQEGRDGFVMGEGAGILVIESLESAQARGANIYAEIVGYGTTGDAYHITAPAPEGEGGSRAMQAAMDDAGIEPKDVQYLNAHGTSTPVGDLNEVKAIKNTFGEAAKHLKVSSTKSMTGHLLGATGGIEAIFSALSIKDSKVAPTIHAVTPDPECDLDIVPNEAQDLDITYAMSNSLGFGGHNAVLVFKKFEA.

A Ketosynthase family 3 (KS3) domain is found at 4–411 (NIRVVITGMG…GHNAVLVFKK (408 aa)). Residues Cys-165, His-304, and His-341 each act as for beta-ketoacyl synthase activity in the active site.

This sequence belongs to the thiolase-like superfamily. Beta-ketoacyl-ACP synthases family.

It catalyses the reaction a fatty acyl-[ACP] + malonyl-[ACP] + H(+) = a 3-oxoacyl-[ACP] + holo-[ACP] + CO2. It carries out the reaction (9Z)-hexadecenoyl-[ACP] + malonyl-[ACP] + H(+) = 3-oxo-(11Z)-octadecenoyl-[ACP] + holo-[ACP] + CO2. Its pathway is lipid metabolism; fatty acid biosynthesis. In terms of biological role, involved in the type II fatty acid elongation cycle. Catalyzes the elongation of a wide range of acyl-ACP by the addition of two carbons from malonyl-ACP to an acyl acceptor. Can efficiently catalyze the conversion of palmitoleoyl-ACP (cis-hexadec-9-enoyl-ACP) to cis-vaccenoyl-ACP (cis-octadec-11-enoyl-ACP), an essential step in the thermal regulation of fatty acid composition. This chain is 3-oxoacyl-[acyl-carrier-protein] synthase 2 (fabF), found in Staphylococcus aureus (strain MRSA252).